The primary structure comprises 661 residues: Tegument protein UL46 homolog (661 aa).

A disordered region spans residues 1-31 (MFSRFARSFSSDDRTRKSYDGSYQSFNAGER). A compositionally biased stretch (basic and acidic residues) spans 10–19 (SSDDRTRKSY). 2 helical membrane-spanning segments follow: residues 299–319 (AGTGVAFILAATTASALTALL) and 339–359 (AAIVAAVELITLLHHHFQYLI).

This sequence belongs to the herpesviridae HHV-1 VP11/12 protein family. In terms of processing, phosphorylated by host LCK. The phosphorylation seems to be lymphocyte-specific.

It is found in the virion tegument. The protein resides in the host cytoplasm. It localises to the host membrane. Plays a role in the activation of the host PI3K/AKT pathway to promote cell survival. Interacts with and activates PI3KR1 in order to phosphorylate host AKT on its activating residues. Activates the host AP-1 pathway by triggering phosphorylation of host ERK1/2. Participates in host BIM and BAD phosphorylation, leading to apoptosis inhibition. This chain is Tegument protein UL46 homolog, found in Varicella-zoster virus (strain Oka vaccine) (HHV-3).